A 254-amino-acid chain; its full sequence is Putative biopolymer transport protein ExbB-like 1 (254 aa).

Transmembrane regions (helical) follow at residues 39 to 59 (GGVVMFPLLLLSILALTTAFE), 141 to 161 (LETIIALAPLLGLLGTVTGLI), and 185 to 205 (IGEALITTAAGMMVAIFALLV).

This sequence belongs to the ExbB/TolQ family.

The protein localises to the cell inner membrane. Functionally, involved in the TonB-dependent energy-dependent transport of various receptor-bound substrates. Protects ExbD from proteolytic degradation and functionally stabilizes TonB. The sequence is that of Putative biopolymer transport protein ExbB-like 1 from Synechocystis sp. (strain ATCC 27184 / PCC 6803 / Kazusa).